The chain runs to 206 residues: Cytochrome b6-f complex iron-sulfur subunit, chloroplastic (206 aa).

A chloroplast-targeting transit peptide spans 1 to 29 (MAMLSSRRVAAPAKASAIRRSRVMPVVRA). Residues 39–68 (MNKRNIMNLILAGGAGLPITTLALGYGAFF) traverse the membrane as a helical segment. One can recognise a Rieske domain in the interval 92–188 (AGEWLKTHLA…CDVAESGLVT (97 aa)). Residues Cys134, His136, Cys152, and His155 each coordinate [2Fe-2S] cluster. Residues Cys139 and Cys154 are joined by a disulfide bond.

The protein belongs to the Rieske iron-sulfur protein family. As to quaternary structure, the 4 large subunits of the cytochrome b6-f complex are cytochrome b6, subunit IV (17 kDa polypeptide, petD), cytochrome f and the Rieske protein, while the 4 small subunits are petG, petL, petM and petN. The complex functions as a dimer. [2Fe-2S] cluster is required as a cofactor.

It localises to the plastid. Its subcellular location is the chloroplast thylakoid membrane. The catalysed reaction is 2 oxidized [plastocyanin] + a plastoquinol + 2 H(+)(in) = 2 reduced [plastocyanin] + a plastoquinone + 4 H(+)(out). Its function is as follows. Component of the cytochrome b6-f complex, which mediates electron transfer between photosystem II (PSII) and photosystem I (PSI), cyclic electron flow around PSI, and state transitions. This Chlamydomonas reinhardtii (Chlamydomonas smithii) protein is Cytochrome b6-f complex iron-sulfur subunit, chloroplastic (petC).